Consider the following 126-residue polypeptide: UPF0102 protein plu4003 (126 aa).

The protein belongs to the UPF0102 family.

The polypeptide is UPF0102 protein plu4003 (Photorhabdus laumondii subsp. laumondii (strain DSM 15139 / CIP 105565 / TT01) (Photorhabdus luminescens subsp. laumondii)).